Here is a 149-residue protein sequence, read N- to C-terminus: Nucleoside diphosphate kinase (149 aa).

Residues lysine 11, phenylalanine 59, arginine 87, threonine 93, arginine 104, and asparagine 114 each contribute to the ATP site. Histidine 117 functions as the Pros-phosphohistidine intermediate in the catalytic mechanism.

This sequence belongs to the NDK family. In terms of assembly, homotetramer. It depends on Mg(2+) as a cofactor.

It is found in the cytoplasm. It carries out the reaction a 2'-deoxyribonucleoside 5'-diphosphate + ATP = a 2'-deoxyribonucleoside 5'-triphosphate + ADP. The enzyme catalyses a ribonucleoside 5'-diphosphate + ATP = a ribonucleoside 5'-triphosphate + ADP. In terms of biological role, major role in the synthesis of nucleoside triphosphates other than ATP. The ATP gamma phosphate is transferred to the NDP beta phosphate via a ping-pong mechanism, using a phosphorylated active-site intermediate. The protein is Nucleoside diphosphate kinase of Treponema pallidum (strain Nichols).